A 383-amino-acid polypeptide reads, in one-letter code: F-box/kelch-repeat protein At2g29830 (383 aa).

Residues 1–21 are disordered; that stretch reads MVVLSEIPGDPNEDNQNENPQ. Positions 11-21 are enriched in acidic residues; that stretch reads PNEDNQNENPQ. One can recognise an F-box domain in the interval 27–73; that stretch reads LPILLQLPEELIASIVALIPRCHYPSLSLVSRAFRHLITSQELYVAR. Kelch repeat units lie at residues 130-178, 179-224, 226-272, 274-317, and 324-370; these read KMYV…IIDG, RIYV…FITY, VMQG…VVGD, LYAL…YTST, and KLVI…RDLP.

The chain is F-box/kelch-repeat protein At2g29830 from Arabidopsis thaliana (Mouse-ear cress).